The primary structure comprises 873 residues: Probable beta-glucosidase A (873 aa).

The N-terminal stretch at 1-19 is a signal peptide; it reads MRFGWLEVAALTAASVANA. N-linked (GlcNAc...) asparagine glycosylation is found at N71, N222, and N263. Residue D291 is part of the active site. N-linked (GlcNAc...) asparagine glycans are attached at residues N326, N333, N365, N453, N534, N553, N575, N679, and N725. Residues 730–765 are disordered; it reads EDSSDDPNYGWEDSEYIPEGARDGSPQPLLKAGGAP.

The protein belongs to the glycosyl hydrolase 3 family.

The protein localises to the secreted. It catalyses the reaction Hydrolysis of terminal, non-reducing beta-D-glucosyl residues with release of beta-D-glucose.. It participates in glycan metabolism; cellulose degradation. Beta-glucosidases are one of a number of cellulolytic enzymes involved in the degradation of cellulosic biomass. Catalyzes the last step releasing glucose from the inhibitory cellobiose. The protein is Probable beta-glucosidase A (bglA) of Neosartorya fischeri (strain ATCC 1020 / DSM 3700 / CBS 544.65 / FGSC A1164 / JCM 1740 / NRRL 181 / WB 181) (Aspergillus fischerianus).